The sequence spans 107 residues: MSISLSESAAQRVSAFIANRGKGLGLRLGVRTSGCSGMAYVLEFVDDLNDGDTVFEDKGVKVIVDGKSLVYLDGTELDFVKEGLNEGFKFNNPNISGECGCGESFNV.

Fe cation is bound by residues cysteine 35, cysteine 99, and cysteine 101.

The protein belongs to the HesB/IscA family. In terms of assembly, homodimer; may form tetramers and higher multimers. Requires Fe cation as cofactor.

Is able to transfer iron-sulfur clusters to apo-ferredoxin. Multiple cycles of [2Fe2S] cluster formation and transfer are observed, suggesting that IscA acts catalytically. Recruits intracellular free iron so as to provide iron for the assembly of transient iron-sulfur cluster in IscU in the presence of IscS, L-cysteine and the thioredoxin reductase system TrxA/TrxB. This Pectobacterium atrosepticum (strain SCRI 1043 / ATCC BAA-672) (Erwinia carotovora subsp. atroseptica) protein is Iron-binding protein IscA.